The following is a 676-amino-acid chain: DNA ligase (676 aa).

NAD(+) contacts are provided by residues 35 to 39 (DYEFD), 84 to 85 (SL), and Glu-118. Lys-120 acts as the N6-AMP-lysine intermediate in catalysis. NAD(+) is bound by residues Arg-141, Glu-184, Lys-299, and Lys-323. Zn(2+) contacts are provided by Cys-417, Cys-420, Cys-435, and Cys-441. In terms of domain architecture, BRCT spans 600 to 676 (LINRNFEGVN…ISEDEFNAML (77 aa)).

It belongs to the NAD-dependent DNA ligase family. LigA subfamily. Mg(2+) serves as cofactor. The cofactor is Mn(2+).

The catalysed reaction is NAD(+) + (deoxyribonucleotide)n-3'-hydroxyl + 5'-phospho-(deoxyribonucleotide)m = (deoxyribonucleotide)n+m + AMP + beta-nicotinamide D-nucleotide.. Functionally, DNA ligase that catalyzes the formation of phosphodiester linkages between 5'-phosphoryl and 3'-hydroxyl groups in double-stranded DNA using NAD as a coenzyme and as the energy source for the reaction. It is essential for DNA replication and repair of damaged DNA. This chain is DNA ligase, found in Chlorobium phaeobacteroides (strain DSM 266 / SMG 266 / 2430).